The chain runs to 37 residues: Large ribosomal subunit protein bL36c (37 aa).

The protein belongs to the bacterial ribosomal protein bL36 family.

The protein resides in the plastid. It localises to the chloroplast. This Lepidium virginicum (Virginia pepperweed) protein is Large ribosomal subunit protein bL36c.